A 192-amino-acid chain; its full sequence is UPF0149 protein YE3397 (192 aa).

Belongs to the UPF0149 family.

The protein is UPF0149 protein YE3397 of Yersinia enterocolitica serotype O:8 / biotype 1B (strain NCTC 13174 / 8081).